The primary structure comprises 139 residues: Non-structural protein 1 (139 aa).

A DLNP; interaction with MAP1B motif is present at residues aspartate 136–proline 139.

It belongs to the pneumovirus non-structural protein 1 family. As to quaternary structure, monomer. Homomultimer. Heteromultimer with NS2. Interacts with the matrix protein M. Interacts with host ELOC and CUL2; this interaction allows NS1 to form an active E3 ligase with ELOC and CUL2. Interacts with host IRF3; this interaction leads to the disrupted association of IRF3 with CREBBP and thus reduced binding of IRF3 to the IFN-beta promoter. Interacts with host MAVS; this interaction prevents MAVS binding to RIGI and inhibits signaling pathway leading to interferon production. Interacts with host MAP1B/microtubule-associated protein 1B. Interacts with host TRIM25 (via SPRY domain); this interaction suppresses RIGI ubiquitination and results in decreased interaction between RIGI and MAVS.

Its subcellular location is the host cytoplasm. The protein localises to the host mitochondrion. The protein resides in the host nucleus. Its function is as follows. Plays a major role in antagonizing the type I IFN-mediated antiviral response by degrading or inhibiting multiple cellular factors required for either IFN induction or response pathways. Acts cooperatively with NS2 to repress activation and nuclear translocation of host IFN-regulatory factor IRF3. Also disrupts the association of IRF3 with CREBBP. Interacts with host mitochondrial-associated membrane (MAM) MAVS and prevents the interaction with RIGI. Interacts with TRIM25 to suppress TRIM25-mediated RIGI ubiquitination and thereby RIGI-MAVS interaction. Together with NS2, participates in the proteasomal degradation of host STAT2, IRF3, IRF7, TBK1 and RIGI through a NS-degradasome involving CUL2 and Elongin-C. The degradasome requires an intact mitochondrial MAVS. Decreases the levels of host TRAF3 and IKBKE/IKK-epsilon. As functions other than disruptions of the type I IFN-mediated antiviral signaling pathways, induces host SOCS1 and SOCS3 expression. Suppresses premature apoptosis by an NF-kappa-B-dependent, interferon-independent mechanism and thus facilitates virus growth. Additionally, NS1 may serve some inhibitory role in viral transcription and RNA replication. Suppresses proliferation and activation of host CD103+ CD8+ cytotoxic T-lymphocytes and Th17 helper T-lymphocytes. This is Non-structural protein 1 (1C) from Homo sapiens (Human).